A 404-amino-acid polypeptide reads, in one-letter code: Deoxyguanosinetriphosphate triphosphohydrolase-like protein (404 aa).

The disordered stretch occupies residues 1–33; sequence MSVGMAAPRAAFSCDPDRSRGRQFAEPPSSNRS. An HD domain is found at 69-217; that stretch reads RLTHSLEVAQ…AALADDIAYD (149 aa).

Belongs to the dGTPase family. Type 2 subfamily.

In Rhodopseudomonas palustris (strain HaA2), this protein is Deoxyguanosinetriphosphate triphosphohydrolase-like protein.